A 347-amino-acid chain; its full sequence is NADH-ubiquinone oxidoreductase chain 2 (347 aa).

Transmembrane regions (helical) follow at residues 3–23 (PPIL…VMTS), 25–45 (HWML…PILM), 59–79 (YFLT…INLL), 96–116 (ILMT…FWVP), 122–142 (ISLS…LSVL), 149–169 (INPN…GWGG), 178–198 (IMAY…LYNP), 201–221 (MFLN…LFMI), 237–257 (APLI…LPPL), 274–294 (EMII…YFYM), and 323–343 (MIFL…TPMI).

It belongs to the complex I subunit 2 family. In terms of assembly, core subunit of respiratory chain NADH dehydrogenase (Complex I) which is composed of 45 different subunits. Interacts with TMEM242.

Its subcellular location is the mitochondrion inner membrane. The catalysed reaction is a ubiquinone + NADH + 5 H(+)(in) = a ubiquinol + NAD(+) + 4 H(+)(out). In terms of biological role, core subunit of the mitochondrial membrane respiratory chain NADH dehydrogenase (Complex I) which catalyzes electron transfer from NADH through the respiratory chain, using ubiquinone as an electron acceptor. Essential for the catalytic activity and assembly of complex I. The polypeptide is NADH-ubiquinone oxidoreductase chain 2 (Civettictis civetta (African civet)).